We begin with the raw amino-acid sequence, 261 residues long: 5-oxoprolinase subunit A (261 aa).

The protein belongs to the LamB/PxpA family. As to quaternary structure, forms a complex composed of PxpA, PxpB and PxpC.

The enzyme catalyses 5-oxo-L-proline + ATP + 2 H2O = L-glutamate + ADP + phosphate + H(+). In terms of biological role, catalyzes the cleavage of 5-oxoproline to form L-glutamate coupled to the hydrolysis of ATP to ADP and inorganic phosphate. The chain is 5-oxoprolinase subunit A from Coprothermobacter proteolyticus (strain ATCC 35245 / DSM 5265 / OCM 4 / BT).